The following is a 421-amino-acid chain: Tyrosine--tRNA ligase (421 aa).

Y38 contributes to the L-tyrosine binding site. Residues 43 to 52 (PTGDSLHIGH) carry the 'HIGH' region motif. L-tyrosine contacts are provided by Y169 and Q173. Residues 231–235 (KFGKS) carry the 'KMSKS' region motif. Position 234 (K234) interacts with ATP. The S4 RNA-binding domain occupies 353–419 (KNLVDFLVDT…GKKKYTLVHI (67 aa)).

This sequence belongs to the class-I aminoacyl-tRNA synthetase family. TyrS type 1 subfamily. In terms of assembly, homodimer.

The protein resides in the cytoplasm. It carries out the reaction tRNA(Tyr) + L-tyrosine + ATP = L-tyrosyl-tRNA(Tyr) + AMP + diphosphate + H(+). Its function is as follows. Catalyzes the attachment of tyrosine to tRNA(Tyr) in a two-step reaction: tyrosine is first activated by ATP to form Tyr-AMP and then transferred to the acceptor end of tRNA(Tyr). The polypeptide is Tyrosine--tRNA ligase (Lactobacillus delbrueckii subsp. bulgaricus (strain ATCC 11842 / DSM 20081 / BCRC 10696 / JCM 1002 / NBRC 13953 / NCIMB 11778 / NCTC 12712 / WDCM 00102 / Lb 14)).